Reading from the N-terminus, the 209-residue chain is Zinc finger SWIM domain-containing protein sws1 (209 aa).

Positions 1–30 (MQQGHFTSNSYHSKTLNSSSLPVSSKFSHT) are enriched in polar residues. The tract at residues 1-33 (MQQGHFTSNSYHSKTLNSSSLPVSSKFSHTNDP) is disordered. An SWIM-type zinc finger spans residues 143 to 203 (TTIDLKYWYC…HILAASILRA (61 aa)).

As to quaternary structure, interacts with rdl1, rlp1 and srs2.

Its subcellular location is the cytoplasm. It localises to the nucleus. It is found in the nucleoplasm. Functionally, involved in early stages of the homologous recombination repair (HRR) pathway of double-stranded DNA breaks arising during DNA replication or induced by DNA-damaging agents. The sequence is that of Zinc finger SWIM domain-containing protein sws1 (sws1) from Schizosaccharomyces pombe (strain 972 / ATCC 24843) (Fission yeast).